Here is an 838-residue protein sequence, read N- to C-terminus: Shutoff protein (838 aa).

The tract at residues 1–102 is disordered; the sequence is MEDQHSAASE…EQEEDSPDRY (102 aa). A compositionally biased stretch (pro residues) spans 18–35; it reads TLPPPPPPPPPPTSPPPS. Positions 52-65 are enriched in low complexity; it reads TCSSSSSSSASSEC. Residues 291–353 form a binding to host EIF4G region; sequence LMQTLLVRRA…ACMVTVQLHC (63 aa). One can recognise an RRM domain in the interval 356–474; the sequence is TFLTSREMVR…SLWTGFDERT (119 aa). A phosphotyrosine; by host mark is found at Y373 and Y690. The interval 693–838 is disordered; sequence PHTGEELNTA…QELRRPQRGS (146 aa). Residues 701 to 710 show a composition bias toward low complexity; the sequence is TAAPSTAHHA. 2 stretches are compositionally biased toward basic and acidic residues: residues 737 to 746 and 770 to 787; these read SYADRVRSEL and HSRD…DQRQ. Low complexity predominate over residues 813–829; that stretch reads QALLHQQQQQQEHQPAQ.

The protein belongs to the adenoviridae shutoff protein family. In terms of assembly, monomer. Interacts with hexon protein; this interaction allows chaperoning and trimerization of hexon proteins. Interacts (via N-terminus) with host initiation factor EIF4G (via C-terminus). Interacts (via RRM domain) with viral mRNAs that contain the tripartite leader; this interaction allows ribosome shunting and expression of viral late mRNAs. In terms of processing, might be cleaved by the viral protease. Phosphorylated. Tyrosine phosphorylation enhances preferential binding to tripartite leader mRNAs and allows ribosome shunting. Post-translationally, methylated. Asymmetric dimethylation by host PRMT1 of the Arg/Gly-rich region may regulate shutoff protein binding to hexon and promote the capsid assembly in the nucleus.

It localises to the host cytoplasm. Its function is as follows. Protein that inhibits host translation while promoting late viral translation by ribosome shunting. Blocks host cap-dependent translation by binding to eIF4G, displacing MKNK1 from cap initiation complexes and preventing EIF4E phosphorylation. Binds to the tripartite leader sequence of viral late mRNAs and recruits host eIF4G, PABPC1/poly-A binding protein and 40S ribosomes subunits on viral mRNAs, allowing ribosome shunting and efficient translation of late viral mRNAs even though conventional translation via ribosome scanning from the cap has been shut off in the host cell. During assembly, acts as a chaperone protein that helps hexon proteins assembly into trimers. The polypeptide is Shutoff protein (Porcine adenovirus A serotype 3 (PAdV-3)).